We begin with the raw amino-acid sequence, 219 residues long: Large ribosomal subunit protein uL1 (219 aa).

It belongs to the universal ribosomal protein uL1 family. Component of the large ribosomal subunit.

Its subcellular location is the cytoplasm. This Encephalitozoon cuniculi (strain GB-M1) (Microsporidian parasite) protein is Large ribosomal subunit protein uL1 (RPL1).